The primary structure comprises 255 residues: Fumarate reductase cytochrome b subunit (255 aa).

A run of 5 helical transmembrane segments spans residues 33–53 (TGLILALFMIAHMFLVSSILI), 78–98 (IVSVVAAGVILILVAHAFLAL), 126–146 (WFIQALTGFAMFFLASIHLFV), 168–188 (FWLLYIFLLFAVELHGSIGLY), and 208–228 (IKWAMSVFFIVLGLCTYGAYI). The heme b site is built by His-44, His-93, His-143, and His-182.

The protein belongs to the diheme cytochrome b FrdC family. In terms of assembly, part of an enzyme complex containing three subunits: a flavoprotein (frdA), an iron-sulfur protein (frdB), and diheme cytochrome b (frdC). Heme b is required as a cofactor.

It localises to the cell inner membrane. Functionally, the fumarate reductase enzyme complex is required for fumarate respiration. This subunit anchors the complex in the membrane and binds a diheme cytochrome b. This chain is Fumarate reductase cytochrome b subunit (frdC), found in Helicobacter pylori (strain J99 / ATCC 700824) (Campylobacter pylori J99).